The sequence spans 353 residues: O-antigen biosynthesis glycosyltransferase WclY (353 aa).

Residues 116–136 (SLIGGLLWCSIWLFFDKLVIL) form a helical membrane-spanning segment. Asn190 and Glu271 together coordinate UDP. Positions 263 to 271 (EGFGLTVLE) match the E(x7)E motif.

The protein belongs to the glycosyltransferase group 1 family. Glycosyltransferase 4 subfamily.

The protein localises to the membrane. It functions in the pathway bacterial outer membrane biogenesis; LPS O-antigen biosynthesis. With respect to regulation, activated by 5mM MnCl(2) and MgCl(2). No significant effect on activity by 5 mM ethylenediaminetetraacetic acid (EDTA), 0.125-0.5% Triton X-100 or dithiothreitol (DTT). Inhibited by 5 mM Zn-acetate. Involved in the assembly of the O-repeating unit during O-antigen biosynthesis. Glucosyltransferase accountable for the alpha-D-Glc-1,4-beta-D-Gal linkage within the O-antigen. Transfers alpha-1,4-Glc to the Gal moiety of a specific Gal-beta1-3GalNAc-alpha-OPO3-PO3-phenoxyundecyl (Gal-beta1-3GalNAc-PP-PhU) synthetic natural acceptor substrate analog. Requires both Gal-beta1-3GalNAc-alpha and the diphosphate moiety in the acceptor. Not active with GalNAc-PP-PhU, GlcNAc-PP-PhU, Gal-beta1-3GalNAc-alpha-O-benzyl, D-Rha-alpha1-3GlcNAc-alpha-PP-PhU or D-Man-alpha1-3Man-alpha-5-benzamidopentyl (BAP), nor with glycopeptides TTTVTP (Gal-beta1-3GalNAc-alpha-)TPTG or TT (Gal-beta1-3GalNAc-alpha-)TVTPTPTG as acceptor substrates. Has a broad nucleotide sugar donor substrate specificity with ADP-Glc, TDP-Glc and UDP-Glc as superior donors. Gal, GlcNAc, and GalNAc residues are transferred from UDP-sugars, but with low activity. UDP-Xyl, UDP-GlcA, GDP-Fuc or GDP-K-Rha do not act as donors. This chain is O-antigen biosynthesis glycosyltransferase WclY, found in Escherichia coli.